Here is a 474-residue protein sequence, read N- to C-terminus: 6-phospho-beta-galactosidase (474 aa).

D-galactose 6-phosphate-binding residues include Q19, H116, N159, E160, and N297. The Proton donor role is filled by E160. Residue E375 is the Nucleophile of the active site. Residues S433, W434, K440, and Y442 each coordinate D-galactose 6-phosphate.

The protein belongs to the glycosyl hydrolase 1 family.

The catalysed reaction is a 6-phospho-beta-D-galactoside + H2O = D-galactose 6-phosphate + an alcohol. It functions in the pathway carbohydrate metabolism; lactose degradation; D-galactose 6-phosphate and beta-D-glucose from lactose 6-phosphate: step 1/1. The sequence is that of 6-phospho-beta-galactosidase from Lacticaseibacillus casei (strain BL23) (Lactobacillus casei).